The primary structure comprises 308 residues: Ribonuclease 3 (308 aa).

An RNase III domain is found at 20 to 145 (YLRFYKMLGF…LVGAIYLDRG (126 aa)). Glutamate 62 contacts Mg(2+). Aspartate 66 is a catalytic residue. 2 residues coordinate Mg(2+): asparagine 131 and glutamate 134. Residue glutamate 134 is part of the active site. Residues 173 to 242 (NFKSKLIEWS…ARVALGKIKN (70 aa)) form the DRBM domain. Residues 261–281 (QEEVTVSDSKPSDSGAVTPDL) are disordered.

This sequence belongs to the ribonuclease III family. In terms of assembly, homodimer. The cofactor is Mg(2+).

The protein localises to the cytoplasm. It carries out the reaction Endonucleolytic cleavage to 5'-phosphomonoester.. In terms of biological role, digests double-stranded RNA. Involved in the processing of primary rRNA transcript to yield the immediate precursors to the large and small rRNAs (23S and 16S). Processes some mRNAs, and tRNAs when they are encoded in the rRNA operon. Processes pre-crRNA and tracrRNA of type II CRISPR loci if present in the organism. This Phocaeicola vulgatus (strain ATCC 8482 / DSM 1447 / JCM 5826 / CCUG 4940 / NBRC 14291 / NCTC 11154) (Bacteroides vulgatus) protein is Ribonuclease 3.